The following is a 318-amino-acid chain: Death effector domain-containing protein (318 aa).

One can recognise a DED domain in the interval 25-103 (SLHRMFDIVG…RHDLLPYVTL (79 aa)). The tract at residues 128–191 (PRALSDPEPR…SVTPDPKEKQ (64 aa)) is disordered.

As to quaternary structure, interacts with CASP8, CASP10, KRT8, KRT18, CASP3 and FADD. Homodimerizes and heterodimerizes with DEDD2. Post-translationally, exists predominantly in a mono- or diubiquitinated form. In terms of tissue distribution, widely expressed with highest levels in testis. Within the testis, highly expressed in germ cells but not expressed in Sertoli cells.

It localises to the cytoplasm. Its subcellular location is the nucleus. The protein resides in the nucleolus. Functionally, a scaffold protein that directs CASP3 to certain substrates and facilitates their ordered degradation during apoptosis. May also play a role in mediating CASP3 cleavage of KRT18. Regulates degradation of intermediate filaments during apoptosis. May play a role in the general transcription machinery in the nucleus and might be an important regulator of the activity of GTF3C3. Inhibits DNA transcription in vitro. This chain is Death effector domain-containing protein (Dedd), found in Rattus norvegicus (Rat).